Consider the following 268-residue polypeptide: Mediator of RNA polymerase II transcription subunit 18 (268 aa).

Belongs to the Mediator complex subunit 18 family. Component of the Mediator complex.

It localises to the nucleus. In terms of biological role, component of the Mediator complex, a coactivator involved in the regulated transcription of nearly all RNA polymerase II-dependent genes. Mediator functions as a bridge to convey information from gene-specific regulatory proteins to the basal RNA polymerase II transcription machinery. Mediator is recruited to promoters by direct interactions with regulatory proteins and serves as a scaffold for the assembly of a functional preinitiation complex with RNA polymerase II and the general transcription factors. The polypeptide is Mediator of RNA polymerase II transcription subunit 18 (srb5) (Neosartorya fischeri (strain ATCC 1020 / DSM 3700 / CBS 544.65 / FGSC A1164 / JCM 1740 / NRRL 181 / WB 181) (Aspergillus fischerianus)).